Here is a 282-residue protein sequence, read N- to C-terminus: Bacterial lipoprotein FTN_1103 (282 aa).

Positions 1–28 are cleaved as a signal peptide; that stretch reads MKYGNLMMTKKKLLIGMVTISGIVILGS. A lipid anchor (N-palmitoyl cysteine) is attached at Cys29. Cys29 carries S-diacylglycerol cysteine lipidation.

It is found in the cell membrane. Its function is as follows. Stimulates the host immune inflammatory signaling system allowing the host to combat the bacteria. Stimulates mouse interleukin-6 (Il6) production. The polypeptide is Bacterial lipoprotein FTN_1103 (Francisella tularensis subsp. novicida (strain U112)).